Reading from the N-terminus, the 454-residue chain is Asparagine--tRNA ligase (454 aa).

The protein belongs to the class-II aminoacyl-tRNA synthetase family. As to quaternary structure, homodimer.

It is found in the cytoplasm. The catalysed reaction is tRNA(Asn) + L-asparagine + ATP = L-asparaginyl-tRNA(Asn) + AMP + diphosphate + H(+). This is Asparagine--tRNA ligase from Ureaplasma parvum serovar 3 (strain ATCC 27815 / 27 / NCTC 11736).